Consider the following 153-residue polypeptide: MVNALEVPADLLIRRVARKLKEKYPQVKPPAWAYFAKTGPHKERPPTDRDWWYVRAASILRKLYKSPEPIGIETFRTIYGGRQNRGSAPEHFRKAGGSVPRKILQQLEEAGLVVKVPGRGRTISPAGRSLLDTTAREIMEELVKTRPELERYL.

This sequence belongs to the eukaryotic ribosomal protein eS19 family. As to quaternary structure, part of the 30S ribosomal subunit.

May be involved in maturation of the 30S ribosomal subunit. This is Small ribosomal subunit protein eS19 from Aeropyrum pernix (strain ATCC 700893 / DSM 11879 / JCM 9820 / NBRC 100138 / K1).